A 225-amino-acid polypeptide reads, in one-letter code: MSLPEPLLRADWPRERLLRHGAATLSDPELLALALRTGVAGCNAVQLGHDLLRRFGGLRGLLGTSPAELQVVPGLGTAKACVLAAVLELARRTLEEDLVRQDALANPDLVRRYCQAALGHRKVEHCIALYLDARLKLIICAEVARGTLTQAQIYPREIVREALRHHAAALILAHNHPGGTAAASAADIAMTRQIRQALALIDVRLIDHVIVAGAATVSMAAQGHL.

Residues 103–225 (ALANPDLVRR…TVSMAAQGHL (123 aa)) enclose the MPN domain. The Zn(2+) site is built by H174, H176, and D187. The short motif at 174–187 (HNHPGGTAAASAAD) is the JAMM motif element.

Belongs to the UPF0758 family.

The chain is UPF0758 protein BB3258 from Bordetella bronchiseptica (strain ATCC BAA-588 / NCTC 13252 / RB50) (Alcaligenes bronchisepticus).